The sequence spans 225 residues: UPF0758 protein NMB1038 (225 aa).

The MPN domain occupies 102–224 (VLSDPDTVAD…VCSFRQLGLM (123 aa)). Zn(2+) is bound by residues H173, H175, and D186. The JAMM motif signature appears at 173–186 (HNHPGGSPEPSQED).

This sequence belongs to the UPF0758 family.

The sequence is that of UPF0758 protein NMB1038 from Neisseria meningitidis serogroup B (strain ATCC BAA-335 / MC58).